Consider the following 285-residue polypeptide: tRNA (guanine-N(7)-)-methyltransferase (285 aa).

Residues Gly102, 125 to 126 (EI), 160 to 161 (NA), and Cys180 each bind S-adenosyl-L-methionine. Asp183 is a catalytic residue. Position 258 to 260 (258 to 260 (TEE)) interacts with S-adenosyl-L-methionine.

This sequence belongs to the class I-like SAM-binding methyltransferase superfamily. TrmB family. As to quaternary structure, forms a complex with TRM82.

Its subcellular location is the nucleus. It carries out the reaction guanosine(46) in tRNA + S-adenosyl-L-methionine = N(7)-methylguanosine(46) in tRNA + S-adenosyl-L-homocysteine. It participates in tRNA modification; N(7)-methylguanine-tRNA biosynthesis. Its function is as follows. Catalyzes the formation of N(7)-methylguanine at position 46 (m7G46) in tRNA. The chain is tRNA (guanine-N(7)-)-methyltransferase from Candida glabrata (strain ATCC 2001 / BCRC 20586 / JCM 3761 / NBRC 0622 / NRRL Y-65 / CBS 138) (Yeast).